The chain runs to 232 residues: Ubiquinone biosynthesis O-methyltransferase (232 aa).

S-adenosyl-L-methionine contacts are provided by R36, G55, D76, and M120.

The protein belongs to the methyltransferase superfamily. UbiG/COQ3 family.

The enzyme catalyses a 3-demethylubiquinol + S-adenosyl-L-methionine = a ubiquinol + S-adenosyl-L-homocysteine + H(+). It catalyses the reaction a 3-(all-trans-polyprenyl)benzene-1,2-diol + S-adenosyl-L-methionine = a 2-methoxy-6-(all-trans-polyprenyl)phenol + S-adenosyl-L-homocysteine + H(+). The protein operates within cofactor biosynthesis; ubiquinone biosynthesis. In terms of biological role, O-methyltransferase that catalyzes the 2 O-methylation steps in the ubiquinone biosynthetic pathway. The chain is Ubiquinone biosynthesis O-methyltransferase from Burkholderia orbicola (strain MC0-3).